Here is a 291-residue protein sequence, read N- to C-terminus: Elongation factor Ts (291 aa).

The segment at 79 to 82 (TDFV) is involved in Mg(2+) ion dislocation from EF-Tu.

It belongs to the EF-Ts family.

The protein resides in the cytoplasm. In terms of biological role, associates with the EF-Tu.GDP complex and induces the exchange of GDP to GTP. It remains bound to the aminoacyl-tRNA.EF-Tu.GTP complex up to the GTP hydrolysis stage on the ribosome. The chain is Elongation factor Ts from Jannaschia sp. (strain CCS1).